The primary structure comprises 379 residues: D-threonine aldolase (379 aa).

Lysine 59 carries the N6-(pyridoxal phosphate)lysine modification.

It belongs to the DSD1 family. Pyridoxal 5'-phosphate is required as a cofactor. The cofactor is Mn(2+). It depends on Co(2+) as a cofactor. Requires Ni(2+) as cofactor. Mg(2+) serves as cofactor.

The enzyme catalyses D-threonine = acetaldehyde + glycine. It catalyses the reaction D-allo-threonine = acetaldehyde + glycine. With respect to regulation, inhibited by the carbonyl reagents hydroxylamine, phenylhydrazine and semicarbazide. Inhibited by the chelating agent EDTA. Inhibited by the sulfhydryl reagent p-chloromercuribenzoic acid, and by sodium cyanide. Inhibited by iodoacetate, Ag(2)SO(4), HgCl(2) and CdCl(2). Competitively inhibited by beta-hydroxyaspartate and O-phospho-DL-threonine. In terms of biological role, catalyzes the reversible cleavage of D-threonine or D-allothreonine into glycine and acetaldehyde. Can also cleave D-beta-phenylserine, D-beta-hydroxy-alpha-aminovaleric acid, D-beta-3,4-dihydroxyphenylserine and D-beta-3,4-methylenedioxyphenylserine into glycine and the corresponding aldehyde compounds. Inactive towards D-serine, beta-hydroxyaspartate and O-phospho-DL-threonine. This is D-threonine aldolase from Arthrobacter sp.